The primary structure comprises 375 residues: ELAV-like protein 2 (375 aa).

3 consecutive RRM domains span residues 67 to 145, 153 to 233, and 292 to 370; these read TNLI…YARP, ANLY…FANN, and WCIF…FKTS.

It belongs to the RRM elav family. Part of a ribonucleoprotein (RNP) complex, at least composed of elavl1/elrA and/or elavl2/elrB, igf2bp3/vg1RBP, ddx6/Xp54, ybx2/frgy2, lsm14b/rap55b and, in a subset of RNP complexes, stau1/staufen. Binds RNA as a homooligomer.

The protein resides in the cytoplasm. It localises to the cell cortex. In terms of biological role, binds to poly-U elements and AU-rich elements (AREs) in the 3'-UTR of target mRNAs. Required for the vegetal localization of vg1 mRNA. Probably required for nervous system development. The chain is ELAV-like protein 2 from Xenopus tropicalis (Western clawed frog).